A 359-amino-acid chain; its full sequence is MEISKYKAVLALVMLQFTSAGVALFTKAAFMEGLNPTVFVVYRQAIATLFICPISFISAWRKENKPSLGVRGFWWVALTAVIGVTVNQNAYFKGIDLSSSSMACAMTNLIPAVTFIISIIVGFESIKRRSMKSVAKVIGTGVCVGGAMAMTFLRGPKLLNALLNQDNTAWLLGCFFLLISTFAWSLWLILQVPIASHCPDHLYTSACTCFIATIASFLVALALGNTHLPPWKLDSFLKLSCCIYSGFQLAISFFLQAWIVSQKGPVFSALFNPLSAVIVTFFGALYLKEQTYLGSLLGALAIILGLYIVLWGKSEDYQEESTDLKLENEHNTSSQSDIVSIMIGDKAFRSSELLEPLLM.

The next 10 helical transmembrane spans lie at 10–30 (LALV…KAAF), 37–57 (TVFV…ISFI), 66–86 (PSLG…GVTV), 103–123 (ACAM…IVGF), 133–153 (SVAK…MTFL), 170–190 (WLLG…WLIL), 204–224 (TSAC…LALG), 240–260 (SCCI…AWIV), 266–286 (VFSA…GALY), and 292–312 (YLGS…VLWG). Residues 18-131 (TSAGVALFTK…GFESIKRRSM (114 aa)) enclose the EamA 1 domain. The EamA 2 domain occupies 199–310 (PDHLYTSACT…AIILGLYIVL (112 aa)).

It belongs to the drug/metabolite transporter (DMT) superfamily. Plant drug/metabolite exporter (P-DME) (TC 2.A.7.4) family.

The protein localises to the membrane. This Arabidopsis thaliana (Mouse-ear cress) protein is WAT1-related protein At4g28040.